We begin with the raw amino-acid sequence, 145 residues long: uncharacterized protein (145 aa).

A signal peptide spans M1–G26.

This is an uncharacterized protein from Saccharomyces cerevisiae (strain ATCC 204508 / S288c) (Baker's yeast).